The primary structure comprises 549 residues: uncharacterized protein (549 aa).

The first 19 residues, Met1–Ala19, serve as a signal peptide directing secretion.

This is an uncharacterized protein from Escherichia coli (strain K12).